Here is a 284-residue protein sequence, read N- to C-terminus: Bifunctional protein FolD (284 aa).

Residues 165-167 (GRS), Ser190, and Ile231 contribute to the NADP(+) site.

The protein belongs to the tetrahydrofolate dehydrogenase/cyclohydrolase family. In terms of assembly, homodimer.

It catalyses the reaction (6R)-5,10-methylene-5,6,7,8-tetrahydrofolate + NADP(+) = (6R)-5,10-methenyltetrahydrofolate + NADPH. It carries out the reaction (6R)-5,10-methenyltetrahydrofolate + H2O = (6R)-10-formyltetrahydrofolate + H(+). It functions in the pathway one-carbon metabolism; tetrahydrofolate interconversion. In terms of biological role, catalyzes the oxidation of 5,10-methylenetetrahydrofolate to 5,10-methenyltetrahydrofolate and then the hydrolysis of 5,10-methenyltetrahydrofolate to 10-formyltetrahydrofolate. This Clostridium kluyveri (strain ATCC 8527 / DSM 555 / NBRC 12016 / NCIMB 10680 / K1) protein is Bifunctional protein FolD.